Here is a 199-residue protein sequence, read N- to C-terminus: Protein extra-macrochaetae (199 aa).

The bHLH domain occupies 23–75; sequence RIQRHPTHRGDGENAEMKMYLSKLKDLVPFMPKNRKLTKLEIIQHVIDYICDL. Phosphoserine is present on Ser106. Residues 127-199 form a disordered region; sequence RLNAEQPAKV…QNAEKDSRQS (73 aa). Residues 161–182 show a composition bias toward low complexity; that stretch reads QQHQQQQQLQLQQQQLQSQQQL.

In terms of assembly, heterodimer with other HLH proteins.

Its subcellular location is the nucleus. Its function is as follows. Participates in sensory organ patterning by antagonizing the neurogenic activity of the Achaete-scute complex (AS-C). It lacks a basic DNA-binding domain but is able to form heterodimers with other HLH proteins, thereby inhibiting DNA binding. May sequester proneural proteins in complexes inefficient for DNA interaction. EMC also affects vein differentiation. Inhibits the activity of AS-C proteins by forming an non-DNA binding heterodimer. This is Protein extra-macrochaetae (emc) from Drosophila melanogaster (Fruit fly).